Consider the following 311-residue polypeptide: Methionyl-tRNA formyltransferase (311 aa).

110–113 (SLLP) lines the (6S)-5,6,7,8-tetrahydrofolate pocket.

This sequence belongs to the Fmt family.

The catalysed reaction is L-methionyl-tRNA(fMet) + (6R)-10-formyltetrahydrofolate = N-formyl-L-methionyl-tRNA(fMet) + (6S)-5,6,7,8-tetrahydrofolate + H(+). Its function is as follows. Attaches a formyl group to the free amino group of methionyl-tRNA(fMet). The formyl group appears to play a dual role in the initiator identity of N-formylmethionyl-tRNA by promoting its recognition by IF2 and preventing the misappropriation of this tRNA by the elongation apparatus. This chain is Methionyl-tRNA formyltransferase, found in Streptococcus pneumoniae (strain Taiwan19F-14).